A 619-amino-acid polypeptide reads, in one-letter code: Chaperone protein HscA homolog (619 aa).

This sequence belongs to the heat shock protein 70 family.

Chaperone involved in the maturation of iron-sulfur cluster-containing proteins. Has a low intrinsic ATPase activity which is markedly stimulated by HscB. The protein is Chaperone protein HscA homolog of Pseudomonas aeruginosa (strain UCBPP-PA14).